The sequence spans 1015 residues: DNA ligase 3 (1015 aa).

The PARP-type zinc-finger motif lies at 94-186 (FCVDYAKRGT…QISQHIADLS (93 aa)). 4 residues coordinate Zn(2+): Cys-106, Cys-109, His-140, and Cys-143. 4 positions are modified to phosphoserine: Ser-211, Ser-217, Ser-228, and Ser-244. The segment at 229-255 (GFSAAKPNNSEQAPSSPAPGTSLSASK) is disordered. The span at 234-253 (KPNNSEQAPSSPAPGTSLSA) shows a compositional bias: polar residues. 4 interaction with DNA regions span residues 279 to 282 (PSYN), 323 to 328 (VYNLND), 393 to 396 (TKED), and 426 to 432 (KMNSGAK). Glu-511 contributes to the ATP binding site. The active-site N6-AMP-lysine intermediate is Lys-513. The ATP site is built by Arg-518 and Arg-533. Positions 565 and 660 each coordinate Mg(2+). The ATP site is built by Lys-665, Arg-676, and Lys-680. The disordered stretch occupies residues 849–926 (DEASPTTGGS…KSSPVKVGMK (78 aa)). A compositionally biased stretch (low complexity) spans 854 to 884 (TTGGSSGENEGTAGSAGPCKGPPSKSSASAK). Ser-919 is subject to Phosphoserine. Residues 939–1015 (VLLDVFTGVR…IRKRRLIAPC (77 aa)) enclose the BRCT domain.

Belongs to the ATP-dependent DNA ligase family. As to quaternary structure, isoform 3 interacts (via BRCT domain) with the nuclear DNA-repair protein XRCC1. Interacts with POLG. Interacts with POLB. Requires Mg(2+) as cofactor. As to expression, the alpha isoform is expressed in all tissues, while the beta isoform is expressed only in the testis.

It is found in the nucleus. It catalyses the reaction ATP + (deoxyribonucleotide)n-3'-hydroxyl + 5'-phospho-(deoxyribonucleotide)m = (deoxyribonucleotide)n+m + AMP + diphosphate.. In terms of biological role, the alpha isoform interacts with DNA-repair protein XRCC1 and can correct defective DNA strand-break repair and sister chromatid exchange following treatment with ionizing radiation and alkylating agents. The beta isoform does not interact with XRCC1 and may be specifically involved in the completion of homologous recombination events that occur during meiotic prophase. The protein is DNA ligase 3 (Lig3) of Mus musculus (Mouse).